Reading from the N-terminus, the 625-residue chain is tRNA uridine 5-carboxymethylaminomethyl modification enzyme MnmG (625 aa).

Residues 11-16 (GAGHAG), Val123, and Ser178 contribute to the FAD site. An NAD(+)-binding site is contributed by 271–285 (GPRYCPSIETKIVTF). FAD is bound at residue Gln368.

The protein belongs to the MnmG family. In terms of assembly, homodimer. Heterotetramer of two MnmE and two MnmG subunits. It depends on FAD as a cofactor.

It localises to the cytoplasm. In terms of biological role, NAD-binding protein involved in the addition of a carboxymethylaminomethyl (cmnm) group at the wobble position (U34) of certain tRNAs, forming tRNA-cmnm(5)s(2)U34. This chain is tRNA uridine 5-carboxymethylaminomethyl modification enzyme MnmG, found in Bacteroides fragilis (strain ATCC 25285 / DSM 2151 / CCUG 4856 / JCM 11019 / LMG 10263 / NCTC 9343 / Onslow / VPI 2553 / EN-2).